Consider the following 432-residue polypeptide: Asparagine--tRNA ligase 2 (432 aa).

This sequence belongs to the class-II aminoacyl-tRNA synthetase family. As to quaternary structure, homodimer.

Its subcellular location is the cytoplasm. The catalysed reaction is tRNA(Asn) + L-asparagine + ATP = L-asparaginyl-tRNA(Asn) + AMP + diphosphate + H(+). The sequence is that of Asparagine--tRNA ligase 2 (asnS2) from Lactiplantibacillus plantarum (strain ATCC BAA-793 / NCIMB 8826 / WCFS1) (Lactobacillus plantarum).